Here is a 134-residue protein sequence, read N- to C-terminus: uncharacterized protein (134 aa).

It to E.coli YbcV and YdfO.

This is an uncharacterized protein from Escherichia coli (strain K12).